The following is a 222-amino-acid chain: Endonuclease V (222 aa).

Mg(2+) contacts are provided by Asp-34 and Asp-102.

It belongs to the endonuclease V family. The cofactor is Mg(2+).

It localises to the cytoplasm. It carries out the reaction Endonucleolytic cleavage at apurinic or apyrimidinic sites to products with a 5'-phosphate.. DNA repair enzyme involved in the repair of deaminated bases. Selectively cleaves double-stranded DNA at the second phosphodiester bond 3' to a deoxyinosine leaving behind the intact lesion on the nicked DNA. The protein is Endonuclease V of Photorhabdus laumondii subsp. laumondii (strain DSM 15139 / CIP 105565 / TT01) (Photorhabdus luminescens subsp. laumondii).